Reading from the N-terminus, the 276-residue chain is uncharacterized protein (276 aa).

Positions 20 to 137 (PVLIFIPGAN…PPINTFLPDS (118 aa)) constitute an AB hydrolase-1 domain. Positions 57–76 (GESELTEPLPDSASNPDSDY) are disordered.

This sequence belongs to the AB hydrolase superfamily.

This is an uncharacterized protein from Staphylococcus aureus (strain USA300).